The following is a 353-amino-acid chain: Alanine racemase (353 aa).

The Proton acceptor; specific for D-alanine role is filled by K34. An N6-(pyridoxal phosphate)lysine modification is found at K34. R128 is a substrate binding site. The active-site Proton acceptor; specific for L-alanine is the Y251. M299 contributes to the substrate binding site.

Belongs to the alanine racemase family. The cofactor is pyridoxal 5'-phosphate.

The catalysed reaction is L-alanine = D-alanine. The protein operates within amino-acid biosynthesis; D-alanine biosynthesis; D-alanine from L-alanine: step 1/1. Catalyzes the interconversion of L-alanine and D-alanine. May also act on other amino acids. The chain is Alanine racemase (alr) from Alcanivorax borkumensis (strain ATCC 700651 / DSM 11573 / NCIMB 13689 / SK2).